A 74-amino-acid chain; its full sequence is Putative membrane protein insertion efficiency factor (74 aa).

The protein belongs to the UPF0161 family.

It is found in the cell inner membrane. Its function is as follows. Could be involved in insertion of integral membrane proteins into the membrane. The chain is Putative membrane protein insertion efficiency factor from Anaeromyxobacter sp. (strain Fw109-5).